Consider the following 361-residue polypeptide: 3-dehydroquinate synthase (361 aa).

Residues 72-77, 130-131, lysine 142, and lysine 151 contribute to the NAD(+) site; these read SGEKEK and TT. 3 residues coordinate Zn(2+): glutamate 184, histidine 247, and histidine 264.

Belongs to the sugar phosphate cyclases superfamily. Dehydroquinate synthase family. The cofactor is NAD(+). Co(2+) serves as cofactor. Requires Zn(2+) as cofactor.

It localises to the cytoplasm. The enzyme catalyses 7-phospho-2-dehydro-3-deoxy-D-arabino-heptonate = 3-dehydroquinate + phosphate. Its pathway is metabolic intermediate biosynthesis; chorismate biosynthesis; chorismate from D-erythrose 4-phosphate and phosphoenolpyruvate: step 2/7. In terms of biological role, catalyzes the conversion of 3-deoxy-D-arabino-heptulosonate 7-phosphate (DAHP) to dehydroquinate (DHQ). This is 3-dehydroquinate synthase from Bacillus cereus (strain ATCC 14579 / DSM 31 / CCUG 7414 / JCM 2152 / NBRC 15305 / NCIMB 9373 / NCTC 2599 / NRRL B-3711).